Here is an 87-residue protein sequence, read N- to C-terminus: Colicin-E7 immunity protein (87 aa).

Belongs to the colicins ColE2/ColE8/ColE9 and pyocins S1/S2 family.

Functionally, this protein is able to protect a cell, which harbors the plasmid ColE7 encoding colicin E7, against colicin E7, it binds specifically to the DNase-type colicin and inhibits its bactericidal activity. Dimeric ImmE7 may possess a RNase activity that cleaves its own mRNA at a specific site and thus autoregulates translational expression of the downstream ceiE7 gene as well as degradation of the upstream ceaE7 mRNA. In Escherichia coli, this protein is Colicin-E7 immunity protein (imm).